We begin with the raw amino-acid sequence, 222 residues long: 2-C-methyl-D-erythritol 4-phosphate cytidylyltransferase (222 aa).

It belongs to the IspD/TarI cytidylyltransferase family. IspD subfamily.

It catalyses the reaction 2-C-methyl-D-erythritol 4-phosphate + CTP + H(+) = 4-CDP-2-C-methyl-D-erythritol + diphosphate. Its pathway is isoprenoid biosynthesis; isopentenyl diphosphate biosynthesis via DXP pathway; isopentenyl diphosphate from 1-deoxy-D-xylulose 5-phosphate: step 2/6. In terms of biological role, catalyzes the formation of 4-diphosphocytidyl-2-C-methyl-D-erythritol from CTP and 2-C-methyl-D-erythritol 4-phosphate (MEP). In Azobacteroides pseudotrichonymphae genomovar. CFP2, this protein is 2-C-methyl-D-erythritol 4-phosphate cytidylyltransferase.